We begin with the raw amino-acid sequence, 990 residues long: Putative ariadne-like RING finger protein R811 (990 aa).

Residues 8–201 (DLAIVVDATG…IITQTTIKLL (194 aa)) form the VWFA domain. Positions 797 to 990 (EKGLCMICFN…GGAFEYDQDD (194 aa)) are TRIAD supradomain. Zn(2+)-binding residues include C801, C804, C827, and C830. An RING-type 1 zinc finger spans residues 801-854 (CMICFNEFSKSNLRQICGRKVCQSVACYDCMKSWYGENKVGDLIHVNALTCPFC). Residues 855–903 (KQCPMFNILAAFNRQVCAMVRTNNSFDIDWWYGWCLKCFQPKKVVEKEC) form an IBR-type zinc finger. Zn(2+) contacts are provided by C930 and C935. The RING-type 2; atypical zinc finger occupies 930–961 (CPNSLCKIPIIKDGGCNHMECTACKKHFCWLC). C945 is an active-site residue. Zn(2+) contacts are provided by C950 and C953.

This Acanthamoeba polyphaga (Amoeba) protein is Putative ariadne-like RING finger protein R811.